The sequence spans 842 residues: MNNTTEYIDALPLTDIEKAALPKSDIRAVHTALDGEHHPFSRDDDTPLGSVKARLEQAWPDSLAEGQLIKDDEGRTQLQAMPKATRSSMFPDPWRTNPVGRFWDRLRGREVAPRYLSRLTKEQQASEQKWRTVGTIRRYTLLLLTLAQTVVATWYMKTILPYQGWALINPADMFGQDVWVSFMQLLPYILQSGILLLFAVLFCWVSAGFWTALMGFLQLLMGRDKYSISASTVGDEALNPEHRTALIMPICNEDVDRVFAGLRATWESVKATGNAAHFDVYILSDSYNPDICVAEQKAWMELIAEVQGEGQIFYRRRRRRVKRKSGNIDDFCRRWGNQYSYMVVLDADSVMTGECLTGLVRLMEANPNAGIIQSSPKASGMDTLYARCQQFATRVYGPLFTAGLHFWQLGESHYWGHNAIIRVQPFIEHCALAPLPGEGSFAGSILSHDFVEAALMRRAGWGVWIAYDLPGSYEELPPNLLDELKRDRRWCHGNLMNFRLFLVKGMHPVHRAVFLTGVMSYLSAPLWFMFLALSTALQVVHALTEPQYFLQPRQLFPVWPQWRPELAIALFASTMILLFLPKLLSIILIWCKGSKEYGGFCRVTLSLLLEVLFSVLLAPVRMLFHTVFVVSAFLGWEVVWNSPQRDDDSTPWSEAFKRHGSQMLLGLVWAAGMAWLDLRFLFWLAPIVFSLILSPFVSVISSRSTMGLRTKRWKLFLIPEEYSPPQVLVDTDKYLVLNRSRSLDDGFIHAVFNPSFNALATAMATARHRASQVLEIARDRHVEQALNETPEKLNRDRRLVLLSDPITMARLHYRVWSAPERYSSWVNYYSTIKLNPLAIKSK.

Transmembrane regions (helical) follow at residues 141–161, 194–214, 513–533, 570–590, 615–635, and 680–700; these read LLLL…TILP, ILLL…TALM, VFLT…FLAL, LFAS…ILIW, VLLA…AFLG, and FLFW…VSVI.

This sequence belongs to the glycosyltransferase 2 family. OpgH subfamily.

It localises to the cell inner membrane. It functions in the pathway glycan metabolism; osmoregulated periplasmic glucan (OPG) biosynthesis. Involved in the biosynthesis of osmoregulated periplasmic glucans (OPGs). The chain is Glucans biosynthesis glucosyltransferase H from Enterobacter sp. (strain 638).